The following is a 530-amino-acid chain: RNA-binding protein 39 (530 aa).

A disordered region spans residues 1–146 (MADDIDIEAM…PVREPIDNLT (146 aa)). A2 bears the N-acetylalanine mark. Positions 14-32 (PYKKDENKLSSANGHEERS) are enriched in basic and acidic residues. 2 stretches are compositionally biased toward basic residues: residues 33–56 (KKRKKSKSRSRSHERKRSKSKERK) and 64–95 (KKSKSRERKRSRSKERRRSRSRSRDRRFRGRY). Y95 bears the Phosphotyrosine mark. S97 and S100 each carry phosphoserine. A Glycyl lysine isopeptide (Lys-Gly) (interchain with G-Cter in SUMO2) cross-link involves residue K111. S117 carries the phosphoserine modification. A Glycyl lysine isopeptide (Lys-Gly) (interchain with G-Cter in SUMO2) cross-link involves residue K119. Positions 119–130 (KLSRRRSRSKSP) are enriched in basic residues. Phosphoserine is present on residues S121 and S136. The segment covering 131–146 (FRKDKSPVREPIDNLT) has biased composition (basic and acidic residues). T146 is subject to Phosphothreonine. The 78-residue stretch at 153 to 230 (RTVFCMQLAA…VPIIVQASQA (78 aa)) folds into the RRM 1 domain. A Glycyl lysine isopeptide (Lys-Gly) (interchain with G-Cter in SUMO2) cross-link involves residue K244. Positions 250–328 (MRLYVGSLHF…RPMKVGHVTE (79 aa)) constitute an RRM 2 domain. Residues 291-355 (KGYGFITFSD…RTGIDLGTTG (65 aa)) are activating domain. The segment at 291–406 (KGYGFITFSD…IDLQTRLSQQ (116 aa)) is interaction with JUN. A phosphoserine mark is found at S334, S337, and S341. Positions 355–406 (GRLQLMARLAEGTGLQIPPAAQQALQMSGSLAFGAVAEFSFVIDLQTRLSQQ) are interaction with ESR1 and ESR2. The interaction with NCOA6 stretch occupies residues 406-530 (QTEASALAAA…ATQLLVPSRR (125 aa)). Positions 445–508 (EIKDDVIEEC…KMITAAYVPL (64 aa)) constitute an RRM 3 domain.

This sequence belongs to the splicing factor SR family. Interacts with NCOA6 and JUN. Interacts with ESR1 and ESR2, in the presence of estradiol (E2). Interacts with RSRC1 (via Arg/Ser-rich domain). Interacts with SF3B1. Interacts with ZNF106 (via N-terminus). Aryl sulfonamide anticancer drugs, such as indisulam (E7070) or E7820, promote ubiquitination and subsequent degradation by the DCX(DCAF15) complex. RBM39 degradation results in splicing defects and death in cancer cell lines. Aryl sulfonamide anticancer drugs change the substrate specificity of DCAF15 by acting as a molecular glue that promotes binding between DCAF15 and weak affinity interactor RBM39. In terms of tissue distribution, widely expressed. Highly expressed in pancreas, skeletal muscle, lung and brain. Expressed at intermediate level in kidney, liver and heart.

Its subcellular location is the nucleus speckle. Its function is as follows. RNA-binding protein that acts as a pre-mRNA splicing factor. Acts by promoting exon inclusion via regulation of exon cassette splicing. Also acts as a transcriptional coactivator for steroid nuclear receptors ESR1/ER-alpha and ESR2/ER-beta, and JUN/AP-1, independently of the pre-mRNA splicing factor activity. This Homo sapiens (Human) protein is RNA-binding protein 39.